The primary structure comprises 402 residues: Deoxyguanosinetriphosphate triphosphohydrolase-like protein (402 aa).

The 149-residue stretch at 69 to 217 folds into the HD domain; it reads RLTHSLEVAQ…AAIADDIAYD (149 aa).

This sequence belongs to the dGTPase family. Type 2 subfamily.

This Bradyrhizobium diazoefficiens (strain JCM 10833 / BCRC 13528 / IAM 13628 / NBRC 14792 / USDA 110) protein is Deoxyguanosinetriphosphate triphosphohydrolase-like protein.